We begin with the raw amino-acid sequence, 322 residues long: Extracellular metalloprotease AFUA_1G07730 (322 aa).

Residues 1-22 (MLPFNSCVYVLLIISLMSNCRA) form the signal peptide. 2 N-linked (GlcNAc...) asparagine glycosylation sites follow: Asn123 and Asn197. His233 is a Zn(2+) binding site. The active site involves Glu234. Residue His237 coordinates Zn(2+). The cysteines at positions 272 and 299 are disulfide-linked.

This sequence belongs to the peptidase M43B family.

The protein resides in the secreted. In terms of biological role, secreted metalloproteinase that allows assimilation of proteinaceous substrates. Plays a pivotal role as a pathogenicity determinant during infections and contributes to the ability of the pathogen to persist within the mammalian host. The chain is Extracellular metalloprotease AFUA_1G07730 from Aspergillus fumigatus (strain ATCC MYA-4609 / CBS 101355 / FGSC A1100 / Af293) (Neosartorya fumigata).